A 262-amino-acid chain; its full sequence is 14-3-3 protein epsilon (262 aa).

The tract at residues 236–262 (QAEEVDPNAGDGEPKEQIQDVEDQDVS) is disordered. Position 262 is a phosphoserine (Ser-262).

The protein belongs to the 14-3-3 family. In terms of assembly, homodimer. Interacts with phosphorylated yki. Interacts with pav (when serine phosphorylated); the interaction is necessary for association of the complex pav-14-3-3epsilon complex to the microtubules, thereby inhibiting microtubule sliding.

Its function is as follows. Positively regulates Ras-mediated pathways. Acts downstream or parallel to Raf, but upstream of nuclear factors in Ras signaling. Three mutants have been isolated, that suppress the rough eye phenotype caused by mutated Ras1 (sev-Ras1 v12). Inhibits yki activity by restricting its nuclear localization. Together with pav, has a role in the inhibition of microtubule sliding during neurite outgrowth. The protein is 14-3-3 protein epsilon (14-3-3epsilon) of Drosophila melanogaster (Fruit fly).